The primary structure comprises 204 residues: 3,4-dihydroxy-2-butanone 4-phosphate synthase (204 aa).

A Mg(2+)-binding site is contributed by E30. D34 contacts D-ribulose 5-phosphate. Position 59 is an S-glutathionyl cysteine (C59). D-ribulose 5-phosphate contacts are provided by residues T85 and 142 to 146; that span reads RRGHT. Residue H145 participates in Mg(2+) binding.

In terms of assembly, homodimer. Mg(2+) is required as a cofactor. Mn(2+) serves as cofactor. S-glutathionylation is reversible and dependent on a glutaredoxin.

The enzyme catalyses D-ribulose 5-phosphate = (2S)-2-hydroxy-3-oxobutyl phosphate + formate + H(+). The protein operates within cofactor biosynthesis; riboflavin biosynthesis; 2-hydroxy-3-oxobutyl phosphate from D-ribulose 5-phosphate: step 1/1. Catalyzes the conversion of D-ribulose 5-phosphate to formate and 3,4-dihydroxy-2-butanone 4-phosphate. In Candida albicans (strain SC5314 / ATCC MYA-2876) (Yeast), this protein is 3,4-dihydroxy-2-butanone 4-phosphate synthase (RIB3).